A 258-amino-acid polypeptide reads, in one-letter code: Apolipoprotein E (258 aa).

Residues 1–19 (MRVWTVLLGAVLLLAACQA) form the signal peptide. 3 tandem repeats follow at residues 112-133 (VDMEEAKTRVQQYLGEARQVAG), 134-155 (QNLEDVRSRVGTYLRKLRKRLA), and 156-173 (KDTEELRRKLEAYSKEAT). A 3 X 22 AA approximate tandem repeats region spans residues 112–173 (VDMEEAKTRV…KLEAYSKEAT (62 aa)).

It belongs to the apolipoprotein A1/A4/E family. Homotetramer.

Its subcellular location is the secreted. It is found in the extracellular space. It localises to the extracellular matrix. In terms of biological role, APOE is an apolipoprotein, a protein associating with lipid particles, that mainly functions in lipoprotein-mediated lipid transport between organs via the plasma and interstitial fluids. APOE is a core component of plasma lipoproteins and is involved in their production, conversion and clearance. Apolipoproteins are amphipathic molecules that interact both with lipids of the lipoprotein particle core and the aqueous environment of the plasma. The sequence is that of Apolipoprotein E (APOE) from Alligator mississippiensis (American alligator).